We begin with the raw amino-acid sequence, 345 residues long: Phosphoribosylformylglycinamidine cyclo-ligase (345 aa).

Belongs to the AIR synthase family.

It is found in the cytoplasm. It catalyses the reaction 2-formamido-N(1)-(5-O-phospho-beta-D-ribosyl)acetamidine + ATP = 5-amino-1-(5-phospho-beta-D-ribosyl)imidazole + ADP + phosphate + H(+). It functions in the pathway purine metabolism; IMP biosynthesis via de novo pathway; 5-amino-1-(5-phospho-D-ribosyl)imidazole from N(2)-formyl-N(1)-(5-phospho-D-ribosyl)glycinamide: step 2/2. This is Phosphoribosylformylglycinamidine cyclo-ligase from Enterobacter sp. (strain 638).